The chain runs to 122 residues: UPF0102 protein VIBHAR_00890 (122 aa).

This sequence belongs to the UPF0102 family.

The polypeptide is UPF0102 protein VIBHAR_00890 (Vibrio campbellii (strain ATCC BAA-1116)).